A 271-amino-acid chain; its full sequence is Mannosyl-3-phosphoglycerate phosphatase (271 aa).

Residue aspartate 13 is the Nucleophile of the active site. Mg(2+) is bound by residues aspartate 13, aspartate 15, and aspartate 214.

This sequence belongs to the HAD-like hydrolase superfamily. MPGP family. Requires Mg(2+) as cofactor.

It is found in the cytoplasm. The enzyme catalyses 2-O-(alpha-D-mannosyl)-3-phosphoglycerate + H2O = (2R)-2-O-(alpha-D-mannosyl)-glycerate + phosphate. The polypeptide is Mannosyl-3-phosphoglycerate phosphatase (yedP) (Escherichia coli O6:H1 (strain CFT073 / ATCC 700928 / UPEC)).